Here is a 211-residue protein sequence, read N- to C-terminus: Thymidylate kinase (211 aa).

7–14 (GIDASGKS) is a binding site for ATP.

It belongs to the thymidylate kinase family.

The catalysed reaction is dTMP + ATP = dTDP + ADP. Functionally, phosphorylation of dTMP to form dTDP in both de novo and salvage pathways of dTTP synthesis. This chain is Thymidylate kinase, found in Mesomycoplasma hyopneumoniae (strain 232) (Mycoplasma hyopneumoniae).